A 294-amino-acid chain; its full sequence is ATP synthase gamma chain (294 aa).

This sequence belongs to the ATPase gamma chain family. In terms of assembly, F-type ATPases have 2 components, CF(1) - the catalytic core - and CF(0) - the membrane proton channel. CF(1) has five subunits: alpha(3), beta(3), gamma(1), delta(1), epsilon(1). CF(0) has three main subunits: a, b and c.

It localises to the cell inner membrane. Functionally, produces ATP from ADP in the presence of a proton gradient across the membrane. The gamma chain is believed to be important in regulating ATPase activity and the flow of protons through the CF(0) complex. The protein is ATP synthase gamma chain of Rhizobium etli (strain CIAT 652).